We begin with the raw amino-acid sequence, 118 residues long: Small ribosomal subunit protein uS13 (118 aa).

Residues 94-118 (SLPLRGQRTKTNARTRKGPRKPIKK) form a disordered region.

This sequence belongs to the universal ribosomal protein uS13 family. Part of the 30S ribosomal subunit. Forms a loose heterodimer with protein S19. Forms two bridges to the 50S subunit in the 70S ribosome.

Functionally, located at the top of the head of the 30S subunit, it contacts several helices of the 16S rRNA. In the 70S ribosome it contacts the 23S rRNA (bridge B1a) and protein L5 of the 50S subunit (bridge B1b), connecting the 2 subunits; these bridges are implicated in subunit movement. Contacts the tRNAs in the A and P-sites. The protein is Small ribosomal subunit protein uS13 of Aliivibrio fischeri (strain ATCC 700601 / ES114) (Vibrio fischeri).